The chain runs to 79 residues: Small ribosomal subunit protein uS11 (79 aa).

S14 is modified (phosphoserine). Residues K59 and K61 each participate in a glycyl lysine isopeptide (Lys-Gly) (interchain with G-Cter in SUMO2) cross-link.

Belongs to the universal ribosomal protein uS11 family. In terms of assembly, component of the small ribosomal subunit. Part of the small subunit (SSU) processome, composed of more than 70 proteins and the RNA chaperone small nucleolar RNA (snoRNA) U3.

The protein localises to the cytoplasm. It localises to the nucleus. It is found in the nucleolus. Functionally, component of the small ribosomal subunit. The ribosome is a large ribonucleoprotein complex responsible for the synthesis of proteins in the cell. Part of the small subunit (SSU) processome, first precursor of the small eukaryotic ribosomal subunit. During the assembly of the SSU processome in the nucleolus, many ribosome biogenesis factors, an RNA chaperone and ribosomal proteins associate with the nascent pre-rRNA and work in concert to generate RNA folding, modifications, rearrangements and cleavage as well as targeted degradation of pre-ribosomal RNA by the RNA exosome. The chain is Small ribosomal subunit protein uS11 (RPS14) from Sus scrofa (Pig).